The following is a 214-amino-acid chain: MLELRMKQANNCALIVVDVQNGFTPGGNLAVAGADQIIPCINQLGTCFDTIVITQDWHPHNHISFASNHLGKQPFDTIQLPYGPQVLWPSHCVQGTQDAELHPALDLPTAQLIIRKGFHRNIDSYSAFMEADRHTSTGLAGYLKERGIDTVYIVGIATDFCVAWTAIDASKAGLNSYVIIDACKAIDMNGSLQHAWQEMLASGVQRISSRNILV.

The active-site Proton acceptor is the Asp-18. A divalent metal cation is bound by residues Asp-56, His-58, His-62, and His-91. Lys-116 is an active-site residue. The Nucleophile role is filled by Cys-161.

This sequence belongs to the isochorismatase family. A divalent metal cation is required as a cofactor.

It catalyses the reaction nicotinamide + H2O = nicotinate + NH4(+). Its pathway is cofactor biosynthesis; nicotinate biosynthesis; nicotinate from nicotinamide: step 1/1. Its function is as follows. Catalyzes the deamidation of nicotinamide (NAM) into nicotinate (Na). Functions in the deamidating salvage pathway for production of NAD from nicotinamide. The chain is Nicotinamidase from Acinetobacter baylyi (strain ATCC 33305 / BD413 / ADP1).